The primary structure comprises 401 residues: Argininosuccinate synthase (401 aa).

9 to 17 (AYSGGLDTS) is an ATP binding site. An L-citrulline-binding site is contributed by Tyr-88. Gly-118 lines the ATP pocket. Thr-120, Asn-124, and Asp-125 together coordinate L-aspartate. Asn-124 lines the L-citrulline pocket. Residues Arg-128, Ser-177, Ser-186, Glu-262, and Tyr-274 each contribute to the L-citrulline site.

Belongs to the argininosuccinate synthase family. Type 1 subfamily. As to quaternary structure, homotetramer.

It localises to the cytoplasm. The enzyme catalyses L-citrulline + L-aspartate + ATP = 2-(N(omega)-L-arginino)succinate + AMP + diphosphate + H(+). It functions in the pathway amino-acid biosynthesis; L-arginine biosynthesis; L-arginine from L-ornithine and carbamoyl phosphate: step 2/3. This chain is Argininosuccinate synthase, found in Chlorobaculum tepidum (strain ATCC 49652 / DSM 12025 / NBRC 103806 / TLS) (Chlorobium tepidum).